Reading from the N-terminus, the 141-residue chain is Nucleoside diphosphate kinase (141 aa).

ATP-binding residues include lysine 11, phenylalanine 59, arginine 87, threonine 93, arginine 104, and asparagine 114. The Pros-phosphohistidine intermediate role is filled by histidine 117.

Belongs to the NDK family. As to quaternary structure, homotetramer. Mg(2+) is required as a cofactor.

It is found in the cytoplasm. It carries out the reaction a 2'-deoxyribonucleoside 5'-diphosphate + ATP = a 2'-deoxyribonucleoside 5'-triphosphate + ADP. The enzyme catalyses a ribonucleoside 5'-diphosphate + ATP = a ribonucleoside 5'-triphosphate + ADP. Its function is as follows. Major role in the synthesis of nucleoside triphosphates other than ATP. The ATP gamma phosphate is transferred to the NDP beta phosphate via a ping-pong mechanism, using a phosphorylated active-site intermediate. This is Nucleoside diphosphate kinase from Pseudomonas syringae pv. tomato (strain ATCC BAA-871 / DC3000).